Here is a 981-residue protein sequence, read N- to C-terminus: Mineralocorticoid receptor (981 aa).

Positions 1-603 (METKGYHSLP…STGSSRPSKI (603 aa)) are modulating. The segment covering 234 to 258 (SLTCSPSVENRGSRSHSPTHASNVG) has biased composition (polar residues). Disordered regions lie at residues 234–331 (SLTC…ASTV) and 355–376 (AIQDVVPSPDTHEKGAHDVPFP). Ser250, Ser259, Ser283, Ser287, and Ser299 each carry phosphoserine. 2 stretches are compositionally biased toward low complexity: residues 259-300 (SPLS…VSSP) and 309-327 (SVSSPSNNTNNRSTLSSPT). Zn(2+) is bound by residues Cys604, Cys607, Cys621, Cys624, Cys640, Cys646, Cys656, and Cys659. NR C4-type zinc fingers lie at residues 604 to 624 (CLVCGDEASGCHYGVVTCGSC) and 640 to 664 (CAGRNDCIIDKIRRKNCPACRLQKC). A DNA-binding region (nuclear receptor) is located at residues 604 to 669 (CLVCGDEASG…RLQKCLQAGM (66 aa)). Positions 670 to 722 (NLGARKSKKLGKLKGLHEEQPQQPPPPPPQSPEEGTTYIAPTKEPSVNSALVP) are hinge. Positions 684-710 (GLHEEQPQQPPPPPPQSPEEGTTYIAP) are disordered. Residues 691 to 700 (QQPPPPPPQS) are compositionally biased toward pro residues. The 239-residue stretch at 723-961 (QLTSITHALT…EFPAMLVEII (239 aa)) folds into the NR LBD domain. Asn767 and Gln773 together coordinate 21-hydroxyprogesterone. Positions 767 and 773 each coordinate aldosterone. Residues Asn767 and Gln773 each coordinate progesterone. An important for coactivator binding region spans residues 779-782 (KWAK). 21-hydroxyprogesterone is bound by residues Arg814 and Thr942. Positions 814 and 942 each coordinate aldosterone. Positions 814 and 942 each coordinate progesterone.

Belongs to the nuclear hormone receptor family. NR3 subfamily. In terms of assembly, heteromultimeric cytoplasmic complex with HSP90, HSP70, and FKBP4, in the absence of ligand. After ligand binding, it translocates to the nucleus and binds to DNA as a homodimer and as a heterodimer with NR3C1. Binds the coactivator NCOA2. May interact with HSD11B2 in the absence of ligand. Binds the coactivators NCOA1, TIF1 and NRIP1. In terms of processing, phosphorylated. In terms of tissue distribution, detected in liver, brain, heart, kidney, colon, aorta, hippocampus, hypothalamus and adrenal fasciculata.

It is found in the cytoplasm. Its subcellular location is the nucleus. The protein resides in the endoplasmic reticulum membrane. In terms of biological role, receptor for both mineralocorticoids (MC) such as aldosterone and glucocorticoids (GC) such as corticosterone or cortisol. Binds to mineralocorticoid response elements (MRE) and transactivates target genes. The effect of MC is to increase ion and water transport and thus raise extracellular fluid volume and blood pressure and lower potassium levels. The protein is Mineralocorticoid receptor (Nr3c2) of Rattus norvegicus (Rat).